The chain runs to 105 residues: Large ribosomal subunit protein uL24 (105 aa).

This sequence belongs to the universal ribosomal protein uL24 family. In terms of assembly, part of the 50S ribosomal subunit.

Its function is as follows. One of two assembly initiator proteins, it binds directly to the 5'-end of the 23S rRNA, where it nucleates assembly of the 50S subunit. Functionally, one of the proteins that surrounds the polypeptide exit tunnel on the outside of the subunit. The sequence is that of Large ribosomal subunit protein uL24 from Clostridium botulinum (strain Langeland / NCTC 10281 / Type F).